A 765-amino-acid chain; its full sequence is ATP-dependent RNA helicase DBP4 (765 aa).

Basic residues predominate over residues 1 to 14; sequence MAKPRRNNKNKKGQ. Positions 1–24 are disordered; it reads MAKPRRNNKNKKGQSRSQAREKEE. The short motif at 47-75 is the Q motif element; that stretch reads SQFSDLPITQETLRGLNESSFMSLTDIQK. The Helicase ATP-binding domain occupies 78-252; sequence IPIALKGEDL…RLSLTNPKRI (175 aa). 91 to 98 provides a ligand contact to ATP; that stretch reads ARTGSGKT. Positions 200 to 203 match the DEAD box motif; sequence DEAD. Residues 266-438 form the Helicase C-terminal domain; sequence SLDQYYIRIP…SIRPQLQSLC (173 aa). Disordered regions lie at residues 493–526, 552–576, and 641–735; these read KGGSSSKEKKNASRQLVALSKTNEDGESVENEAS, NGSQTKEDEDEEEEDDFMSVKRKDH, and KEQK…DKHN. The segment covering 558-568 has biased composition (acidic residues); sequence EDEDEEEEDDF. 2 stretches are compositionally biased toward basic and acidic residues: residues 641 to 653 and 678 to 688; these read KEQKKAFVSRETE and KEVEKRMRDEE.

This sequence belongs to the DEAD box helicase family. DDX10/DBP4 subfamily. In terms of assembly, interacts with the U3 and U14 snoRNAs. Associates with pre-ribosomal complexes.

The protein localises to the nucleus. It localises to the nucleolus. It catalyses the reaction ATP + H2O = ADP + phosphate + H(+). ATP-dependent RNA helicase required for ribosome biogenesis. Involved in the release of U14 snoRNA in pre-ribosomal complexes. Required for pre-rRNA cleavage at site A2. The chain is ATP-dependent RNA helicase DBP4 (DBP4) from Scheffersomyces stipitis (strain ATCC 58785 / CBS 6054 / NBRC 10063 / NRRL Y-11545) (Yeast).